The following is a 56-amino-acid chain: Chymotrypsin inhibitor (56 aa).

Cystine bridges form between cysteine 3–cysteine 36, cysteine 12–cysteine 32, cysteine 16–cysteine 28, cysteine 20–cysteine 56, and cysteine 38–cysteine 50. One can recognise a TIL domain in the interval cysteine 3–cysteine 56.

It belongs to the serine protease inhibitor-like (TIL domain-containing) family.

It is found in the secreted. In terms of biological role, chymotrypsin and cathepsin G inhibitor. The sequence is that of Chymotrypsin inhibitor from Apis mellifera (Honeybee).